Consider the following 137-residue polypeptide: Large ribosomal subunit protein uL13 (137 aa).

It belongs to the universal ribosomal protein uL13 family. In terms of assembly, part of the 50S ribosomal subunit.

Functionally, this protein is one of the early assembly proteins of the 50S ribosomal subunit, although it is not seen to bind rRNA by itself. It is important during the early stages of 50S assembly. This chain is Large ribosomal subunit protein uL13, found in Methanococcus maripaludis (strain DSM 14266 / JCM 13030 / NBRC 101832 / S2 / LL).